Reading from the N-terminus, the 600-residue chain is ATP-dependent lipid A-core flippase (600 aa).

Transmembrane regions (helical) follow at residues 26-46 (VGIFLLSILGFVIFASTQPML), 82-102 (LLIVLIAAWQGLGSFLGNYFL), 167-187 (VFLFIYLLMMNWKLTLVMLAI), and 266-286 (PMLQLVIYSAMAVLMFLVLFL). Residues 30-321 (LLSILGFVIF…LSEVSSTIQK (292 aa)) enclose the ABC transmembrane type-1 domain. Positions 353 to 589 (LEVKNLSFFY…NGYYARLHAM (237 aa)) constitute an ABC transporter domain. ATP is bound at residue 387–394 (GRSGSGKS).

The protein belongs to the ABC transporter superfamily. Lipid exporter (TC 3.A.1.106) family. In terms of assembly, homodimer.

It localises to the cell inner membrane. It carries out the reaction ATP + H2O + lipid A-core oligosaccharideSide 1 = ADP + phosphate + lipid A-core oligosaccharideSide 2.. Involved in lipopolysaccharide (LPS) biosynthesis. Translocates lipid A-core from the inner to the outer leaflet of the inner membrane. Transmembrane domains (TMD) form a pore in the inner membrane and the ATP-binding domain (NBD) is responsible for energy generation. The polypeptide is ATP-dependent lipid A-core flippase (Pseudomonas syringae pv. tomato (strain ATCC BAA-871 / DC3000)).